The sequence spans 309 residues: ASC1-like protein 1 (309 aa).

Helical transmembrane passes span 27–47 (FFAL…LDCF), 84–104 (CVYF…EPWF), 130–150 (AVYM…MFWE), 156–176 (FGVS…SYVF), 215–235 (FLLF…FWIL), and 260–280 (YVFN…WVLI). Positions 75–289 (RKFKESAWKC…IYRMLVRQIK (215 aa)) constitute a TLC domain.

The protein localises to the endoplasmic reticulum membrane. Its function is as follows. Mediates resistance to sphinganine-analog mycotoxins (SAMs) by restoring the sphingolipid biosynthesis. Could salvage the transport of GPI-anchored proteins from the endoplasmic reticulum to the Golgi apparatus in ceramides-depleted cells after SAM exposure. This Oryza sativa subsp. japonica (Rice) protein is ASC1-like protein 1.